A 291-amino-acid polypeptide reads, in one-letter code: MKSGFVSIIGRTNAGKSTLINSLLEEKIALVSHKQNATRRKIKAIVMHEKNQIIFIDTPGLHESGATLNQLLVQSAIKSIGDCDVILFVASVFDSTKDYENFLSLNPQVPHIIALNKVDLTDNATLLKKLSEYAKFSQHFKAIIPYSSKKKSYKKGLLDEIVKYLDEHEYFYDPEFLSASSEKELYRDFILESIYENLSDELPYSSEVLINRTKDTPNLLILEANIITDTNSHKGMLIGKEGATLKRIGKDARFKISKLAQKKVLLKLFVTVKKNWQKDEEFLKKLLNDEN.

The region spanning K2 to E167 is the Era-type G domain. The tract at residues G10 to S17 is G1. G10–S17 contacts GTP. A G2 region spans residues N36–R40. Residues D57–G60 are G3. GTP contacts are provided by residues D57–L61 and N116–D119. The interval N116–D119 is G4. The segment at Y146–S148 is G5. In terms of domain architecture, KH type-2 spans Y186–K274.

This sequence belongs to the TRAFAC class TrmE-Era-EngA-EngB-Septin-like GTPase superfamily. Era GTPase family. In terms of assembly, monomer.

Its subcellular location is the cytoplasm. It localises to the cell inner membrane. Its function is as follows. An essential GTPase that binds both GDP and GTP, with rapid nucleotide exchange. Plays a role in 16S rRNA processing and 30S ribosomal subunit biogenesis and possibly also in cell cycle regulation and energy metabolism. This Campylobacter jejuni subsp. jejuni serotype O:23/36 (strain 81-176) protein is GTPase Era.